Consider the following 370-residue polypeptide: MELKQTPLHSIHKEMGAKMVPFGGWDMPVQYTGIIQEHLATRANAGIFDVSHMGEIFVTGDANDVLDFLESVTCNTISTMKEGQVQYNAVVNEVGGLVDDITVYKFNDTKYMICSNASNFEAVTQHLLKYVKGNVSIANDSKNWHQIALQGPKADAIFTKYLGKDLSSILYYHFEEMNWRGETIIVSRTGYTGEDGFEIYTSNALGVTLWKELLEIGKDFGLVPVGLGARDTLRLEAKYPLYGHELNAEWTPVESGINFIVKEKSKPYLGYDRIIADKKNGPKSKVVGVRLLEPGVLRENFPIFAADGKEIGKTTSGTHSPSRKESLGLAILQTEFAKNQTEVFVEIRGQKKLAKVETGAFVQGSVRNNR.

The protein belongs to the GcvT family. As to quaternary structure, the glycine cleavage system is composed of four proteins: P, T, L and H.

It carries out the reaction N(6)-[(R)-S(8)-aminomethyldihydrolipoyl]-L-lysyl-[protein] + (6S)-5,6,7,8-tetrahydrofolate = N(6)-[(R)-dihydrolipoyl]-L-lysyl-[protein] + (6R)-5,10-methylene-5,6,7,8-tetrahydrofolate + NH4(+). Functionally, the glycine cleavage system catalyzes the degradation of glycine. The polypeptide is Aminomethyltransferase (Leptospira biflexa serovar Patoc (strain Patoc 1 / Ames)).